Consider the following 162-residue polypeptide: Transcription elongation factor GreB (162 aa).

Residues 52–76 (GKRRLREIDRRIRFLSKRLEALQII) adopt a coiled-coil conformation.

It belongs to the GreA/GreB family. GreB subfamily.

Necessary for efficient RNA polymerase transcription elongation past template-encoded arresting sites. The arresting sites in DNA have the property of trapping a certain fraction of elongating RNA polymerases that pass through, resulting in locked ternary complexes. Cleavage of the nascent transcript by cleavage factors such as GreA or GreB allows the resumption of elongation from the new 3'terminus. GreB releases sequences of up to 9 nucleotides in length. In Haemophilus ducreyi (strain 35000HP / ATCC 700724), this protein is Transcription elongation factor GreB.